The chain runs to 360 residues: Photosystem II protein D1 1 (360 aa).

A run of 3 helical transmembrane segments spans residues tyrosine 29 to threonine 46, histidine 118 to leucine 133, and tryptophan 142 to alanine 156. Histidine 118 contributes to the chlorophyll a binding site. Tyrosine 126 contacts pheophytin a. Aspartate 170 and glutamate 189 together coordinate [CaMn4O5] cluster. The chain crosses the membrane as a helical span at residues phenylalanine 197–leucine 218. Residue histidine 198 coordinates chlorophyll a. A quinone-binding positions include histidine 215 and serine 264 to phenylalanine 265. Histidine 215 is a binding site for Fe cation. Histidine 272 provides a ligand contact to Fe cation. A helical transmembrane segment spans residues phenylalanine 274–leucine 288. [CaMn4O5] cluster is bound by residues histidine 332, glutamate 333, aspartate 342, and alanine 344. Residues serine 345–glycine 360 constitute a propeptide that is removed on maturation.

It belongs to the reaction center PufL/M/PsbA/D family. In terms of assembly, PSII is composed of 1 copy each of membrane proteins PsbA, PsbB, PsbC, PsbD, PsbE, PsbF, PsbH, PsbI, PsbJ, PsbK, PsbL, PsbM, PsbT, PsbX, PsbY, PsbZ, Psb30/Ycf12, peripheral proteins PsbO, CyanoQ (PsbQ), PsbU, PsbV and a large number of cofactors. It forms dimeric complexes. It depends on The D1/D2 heterodimer binds P680, chlorophylls that are the primary electron donor of PSII, and subsequent electron acceptors. It shares a non-heme iron and each subunit binds pheophytin, quinone, additional chlorophylls, carotenoids and lipids. D1 provides most of the ligands for the Mn4-Ca-O5 cluster of the oxygen-evolving complex (OEC). There is also a Cl(-1) ion associated with D1 and D2, which is required for oxygen evolution. The PSII complex binds additional chlorophylls, carotenoids and specific lipids. as a cofactor. Post-translationally, C-terminally processed by CtpA; processing is essential to allow assembly of the oxygen-evolving complex and photosynthetic growth. Tyr-161 forms a radical intermediate that is referred to as redox-active TyrZ, YZ or Y-Z. In terms of processing, C-terminally processed by CtpA; processing is essential to allow assembly of the oxygen-evolving complex and thus photosynthetic growth.

It localises to the cellular thylakoid membrane. It carries out the reaction 2 a plastoquinone + 4 hnu + 2 H2O = 2 a plastoquinol + O2. Photosystem II (PSII) is a light-driven water:plastoquinone oxidoreductase that uses light energy to abstract electrons from H(2)O, generating O(2) and a proton gradient subsequently used for ATP formation. It consists of a core antenna complex that captures photons, and an electron transfer chain that converts photonic excitation into a charge separation. The D1/D2 (PsbA/PsbD) reaction center heterodimer binds P680, the primary electron donor of PSII as well as several subsequent electron acceptors. The sequence is that of Photosystem II protein D1 1 from Synechocystis sp. (strain ATCC 27184 / PCC 6803 / Kazusa).